A 405-amino-acid polypeptide reads, in one-letter code: CMP-sialic acid transporter 4 (405 aa).

The Cytoplasmic portion of the chain corresponds to 1-43 (MQRNGVMECSVCHSKVVAPSPRSVSRAYDKHRSKISSKYRALN). A helical transmembrane segment spans residues 44-64 (FLLVSGDCILVGLQPILVFMS). Residues 65-74 (KVDGKFQFSP) are Lumenal-facing. A helical transmembrane segment spans residues 75-95 (ISVNFLTEVTKVIFAIVMLII). Over 96-121 (QSRKQKVGEKPLLSLSTFVQAARNNA) the chain is Cytoplasmic. A helical membrane pass occupies residues 122 to 142 (LLAVPALLYAINNYLKFIMQL). Tyrosine 143 is a topological domain (lumenal). A helical transmembrane segment spans residues 144 to 164 (FSPATVKMLSNLKVLVIAILL). Over 165-171 (KFIMRRK) the chain is Cytoplasmic. A helical membrane pass occupies residues 172–192 (FSIIQWEALALLLIGISVNQL). The Lumenal segment spans residues 193–203 (SSIPDGTKSFG). Residues 204–224 (LAVTTIAYIYTLIFVTVPSLA) form a helical membrane-spanning segment. Residues 225 to 244 (SVYNEYALKSQFDTSIYLQN) are Cytoplasmic-facing. A helical membrane pass occupies residues 245-265 (LFLYGYGAIFNFLGILGTVIF). At 266 to 281 (QGPESFDILQGHSRAT) the chain is on the lumenal side. The chain crosses the membrane as a helical span at residues 282–302 (MFLICNNAAQGILSSFFFKYA). Residues 303 to 322 (DTILKKYSSTVATIFTGLAS) lie on the Cytoplasmic side of the membrane. The chain crosses the membrane as a helical span at residues 323 to 343 (AAFLGHTLTVNFLLGISIVFI). At 344 to 405 (SMHQFFSPLA…TDERKPLLPI (62 aa)) the chain is on the lumenal side. The disordered stretch occupies residues 386–405 (AADDASHLTSTDERKPLLPI). Positions 389–405 (DASHLTSTDERKPLLPI) are enriched in basic and acidic residues.

It belongs to the nucleotide-sugar transporter family. CMP-Sialate:CMP antiporter (TC 2.A.7.12) subfamily.

Its subcellular location is the golgi apparatus membrane. Sugar transporter involved in the transport of CMP-sialic acid from the cytoplasm into the Golgi. May transport important nucleotide sugars such as CMP-Kdo (2-keto-3-deoxy-D-manno-octulosonic acid) in physiological conditions. The chain is CMP-sialic acid transporter 4 from Oryza sativa subsp. indica (Rice).